A 373-amino-acid chain; its full sequence is MLPFLRSELARCQPYHPNPGGTGMAMDILDTNECPYDLPTDLKQTLADRYVEAIASNRYPDGSHTDLKAAIVDYLSEQTAGQWQPGPEHVTVGNGSDELIRSILIATCLGGQGSVLVAEPTFSMYGIVAETLGIPVVRIGRDPQTWEMDLAAAETAITQTEGTPVRLCFVVHPNSPTANPLTEAEKDWLRQVPPQILVVIDEAYFEFSGETLLAELPQHPNWLITRTFSKALRLAAHRVGYGIGDPQLIAALEAIRLPYNLPSVAQLAATLALEARSQLLSAIPRLITERDRLYRKLQVVSQLQVWPSASNFLFLKTQSSSQTAALAAQLKAQGTLVRHTADGLRITIGSPAENERTLAHLQTAITQSLPATV.

Residue Lys-230 is modified to N6-(pyridoxal phosphate)lysine.

Belongs to the class-II pyridoxal-phosphate-dependent aminotransferase family. Histidinol-phosphate aminotransferase subfamily. Homodimer. Pyridoxal 5'-phosphate is required as a cofactor.

The catalysed reaction is L-histidinol phosphate + 2-oxoglutarate = 3-(imidazol-4-yl)-2-oxopropyl phosphate + L-glutamate. The protein operates within amino-acid biosynthesis; L-histidine biosynthesis; L-histidine from 5-phospho-alpha-D-ribose 1-diphosphate: step 7/9. The protein is Histidinol-phosphate aminotransferase of Synechococcus elongatus (strain ATCC 33912 / PCC 7942 / FACHB-805) (Anacystis nidulans R2).